Here is a 373-residue protein sequence, read N- to C-terminus: MLLGLAAMELKVWVDGIQRVVCGVSEQTTCQEVVIALAQAIGQTGRFVLVQRLREKERQLLPQECPVGAQATCGQFASDVQFVLRRTGPSLAGRPSSDSCPPPERCLIRASLPVKPRAALGCEPRKTLTPEPAPSLSRPGPAAPVTPTPGCCTDLRGLELRVQRNAEELGHEAFWEQELRREQAREREGQARLQALSAATAEHAARLQALDAQARALEAELQLAAEAPGPPSPMASATERLHQDLAVQERQSAEVQGSLALVSRALEAAERALQAQAQELEELNRELRQCNLQQFIQQTGAALPPPPRPDRGPPGTQGPLPPAREESLLGAPSESHAGAQPRPRGGPHDAELLEVAAAPAPEWCPLAAQPQAL.

Positions 6–89 (AAMELKVWVD…VQFVLRRTGP (84 aa)) constitute a Ras-associating domain. Residues 122 to 150 (CEPRKTLTPEPAPSLSRPGPAAPVTPTPG) form a disordered region. Coiled-coil stretches lie at residues 175–227 (WEQE…AAEA) and 248–297 (QERQ…QFIQ). Residues 300-356 (GAALPPPPRPDRGPPGTQGPLPPAREESLLGAPSESHAGAQPRPRGGPHDAELLEVA) form a disordered region.

As to quaternary structure, interacts with MAP2K7 and GTP-bound NRAS. Polyubiquitinated and degraded by the proteasome upon prolonged stress stimuli.

It localises to the cytoplasm. It is found in the cytoskeleton. The protein resides in the microtubule organizing center. The protein localises to the centrosome. Negatively regulates stress-induced JNK activation and apoptosis by promoting MAP2K7 phosphorylation and inhibiting its ability to activate JNK. Following prolonged stress, anti-apoptotic effect stops because of degradation of RASSF7 protein via the ubiquitin-proteasome pathway. Required for the activation of AURKB and chromosomal congression during mitosis where it stimulates microtubule polymerization. In Homo sapiens (Human), this protein is Ras association domain-containing protein 7 (RASSF7).